A 171-amino-acid polypeptide reads, in one-letter code: MAAAGSSSRFAVTCGLLSQYMRERQQPQPPVTVLEAVAEEEEEEDARTMQLFPPRAAAADGVATPSAGTAPLTIFYDGRMVVVDDVPAEKAAELMRLAGSACSPPQPAHAAALPEMPIARKASLQRFLQKRKHRITTTSEPYKKAAVASPAPEKSFAVAPVKDEPATWLGL.

Positions 65–100 (PSAGTAPLTIFYDGRMVVVDDVPAEKAAELMRLAGS) constitute a Tify domain. Residues 117 to 142 (PIARKASLQRFLQKRKHRITTTSEPY) carry the Jas motif. A Nuclear localization signal motif is present at residues 119–126 (ARKASLQR).

Belongs to the TIFY/JAZ family. In terms of assembly, interacts with BHLH148 and COI1A. Interacts with COI1A, COI1B and COI2 in a coronatine-dependent manner. Coronatine is an analog of jasmonoyl isoleucine (JA-Ile). Post-translationally, ubiquitinated. Increase in jasmonoyl isoleucine (JA-Ile) levels mediates its degradation via COI1A-mediated proteasome pathway.

The protein resides in the nucleus. Functionally, repressor of jasmonate (JA) responses. May act on an initial response of JA-regulated gene expression toward drought tolerance as part of a BHLH148-TIFY11D/JAZ12-COI1A complex. This Oryza sativa subsp. indica (Rice) protein is Protein TIFY 11d.